We begin with the raw amino-acid sequence, 513 residues long: ATP synthase subunit alpha 1 (513 aa).

169-176 serves as a coordination point for ATP; the sequence is GDRQTGKT.

This sequence belongs to the ATPase alpha/beta chains family. In terms of assembly, F-type ATPases have 2 components, CF(1) - the catalytic core - and CF(0) - the membrane proton channel. CF(1) has five subunits: alpha(3), beta(3), gamma(1), delta(1), epsilon(1). CF(0) has three main subunits: a(1), b(2) and c(9-12). The alpha and beta chains form an alternating ring which encloses part of the gamma chain. CF(1) is attached to CF(0) by a central stalk formed by the gamma and epsilon chains, while a peripheral stalk is formed by the delta and b chains.

It is found in the cell inner membrane. It catalyses the reaction ATP + H2O + 4 H(+)(in) = ADP + phosphate + 5 H(+)(out). Functionally, produces ATP from ADP in the presence of a proton gradient across the membrane. The alpha chain is a regulatory subunit. The protein is ATP synthase subunit alpha 1 of Methylococcus capsulatus (strain ATCC 33009 / NCIMB 11132 / Bath).